Reading from the N-terminus, the 681-residue chain is Amine oxidase [copper-containing] alpha 3, peroxisomal (681 aa).

323–334 (YLDCGDFGCGQC) is a substrate binding site. Residue Asp325 is the Proton acceptor of the active site. A disulfide bridge connects residues Cys344 and Cys370. 410-415 (VGNYDY) serves as a coordination point for substrate. Tyr413 acts as the Schiff-base intermediate with substrate; via topaquinone in catalysis. Tyr413 carries the post-translational modification 2',4',5'-topaquinone. 2 residues coordinate Cu cation: His470 and His472. Asp481, Asp621, and Ile622 together coordinate Mn(2+). Residue His632 participates in Cu cation binding.

It belongs to the copper/topaquinone oxidase family. Post-translationally, topaquinone (TPQ) is generated by copper-dependent autoxidation of a specific tyrosyl residue. Mostly expressed in stems, and, at lower levels, in flowers and leaves. Mainly detectable in stipules, hypocotyls and roots.

The protein localises to the peroxisome. It catalyses the reaction a primary methyl amine + O2 + H2O = an aldehyde + H2O2 + NH4(+). It functions in the pathway amine and polyamine degradation; putrescine degradation. Functionally, copper amine oxidase that can use putrescine and spermidine as substrates. Involved in putrescine catabolism in peroxisomes. This Arabidopsis thaliana (Mouse-ear cress) protein is Amine oxidase [copper-containing] alpha 3, peroxisomal.